Consider the following 463-residue polypeptide: MTSETRTLYSQLPAIDRLLHDSAFLSLRDRYGHTQVVDLLRRMLDDARDVIRNTQTLPDWYADWAQEAKLRLENAAQSALRPVINLTGTVLHTNLGRALQAQEAIEAVTQAMRAPVTLEYDLDGAGRGHRDRALATLLCRITGAEDACIVNNNAAAVLLMLAATASGKEVVVSRGELVEIGGAFRIPDVMRQAGCTLHEVGTTNRTHAKDYRQAVNENTGLLMKVHTSNYSIEGFTKTVEEAELAEIGRELDIPVVADLGSGSLVDLSQYGLPKEPMPQQLIAAGVSLVSFSGDKLLGGPQAGIIVGKKAMIAQLQSHPLKRALRADKMTLAALEATLRLYLHPEALAEKLPTLRLLTRSEASIREQAQRLQARLAARYGDEFALEVKPCLSQIGSGSLPVDRLPSAAMTFTPHDGRGSRLEALAARWRMLPVPVIGRIYDGRLWLDMRCLEDESRFMEMMLK.

K295 carries the N6-(pyridoxal phosphate)lysine modification.

It belongs to the SelA family. In terms of assembly, homodecamer; pentamer of dimers. Binds only one seryl-tRNA(Sec) per dimer. Requires pyridoxal 5'-phosphate as cofactor.

Its subcellular location is the cytoplasm. It catalyses the reaction L-seryl-tRNA(Sec) + selenophosphate + H(+) = L-selenocysteinyl-tRNA(Sec) + phosphate. It functions in the pathway aminoacyl-tRNA biosynthesis; selenocysteinyl-tRNA(Sec) biosynthesis; selenocysteinyl-tRNA(Sec) from L-seryl-tRNA(Sec) (bacterial route): step 1/1. Functionally, converts seryl-tRNA(Sec) to selenocysteinyl-tRNA(Sec) required for selenoprotein biosynthesis. This is L-seryl-tRNA(Sec) selenium transferase from Salmonella typhimurium (strain LT2 / SGSC1412 / ATCC 700720).